We begin with the raw amino-acid sequence, 938 residues long: Protein translocase subunit SecA 1 (938 aa).

ATP contacts are provided by residues Q84, 102 to 106, and D491; that span reads GEGKT. The tract at residues 865 to 938 is disordered; the sequence is QTGGVATKER…QKTGRHAKRR (74 aa). Basic and acidic residues predominate over residues 918-927; sequence TRKERREAAR.

Belongs to the SecA family. As to quaternary structure, monomer and homodimer. Part of the essential Sec protein translocation apparatus which comprises SecA, SecYEG and auxiliary proteins SecDF. Other proteins may also be involved.

It is found in the cell membrane. The protein localises to the cytoplasm. It catalyses the reaction ATP + H2O + cellular proteinSide 1 = ADP + phosphate + cellular proteinSide 2.. Its function is as follows. Part of the Sec protein translocase complex. Interacts with the SecYEG preprotein conducting channel. Has a central role in coupling the hydrolysis of ATP to the transfer of proteins into and across the cell membrane, serving as an ATP-driven molecular motor driving the stepwise translocation of polypeptide chains across the membrane. This is Protein translocase subunit SecA 1 from Mycolicibacterium vanbaalenii (strain DSM 7251 / JCM 13017 / BCRC 16820 / KCTC 9966 / NRRL B-24157 / PYR-1) (Mycobacterium vanbaalenii).